The chain runs to 396 residues: NASP-related protein sim3 (396 aa).

The segment at 1 to 31 (MSSDTKTLENSKGNSATDADTKNPSSSDSRA) is disordered. TPR repeat units follow at residues 32–65 (IEQLVTQGNMAYAQKNYEEAVDKYGQALMQSESI) and 89–122 (IENSQVLGNALGAKESVSQATESFEEPEAIGSFT). A disordered region spans residues 135 to 164 (NEENSSIAHPEKESEEKETNEASPASEEDE). A compositionally biased stretch (basic and acidic residues) spans 143 to 154 (HPEKESEEKETN). The TPR 3 repeat unit spans residues 199-232 (ADIYDLLGELSLEIENFSQASQDLKTALEWKEKV). The stretch at 267-329 (CEHVEKAAEI…QKTLDLKHGA (63 aa)) forms a coiled coil. Residues 284-301 (RENEVTDKKGKGKQKAEE) show a composition bias toward basic and acidic residues. 2 disordered regions span residues 284–307 (RENEVTDKKGKGKQKAEESTLTSD) and 334–396 (EAVM…KKKD). A compositionally biased stretch (low complexity) spans 343 to 353 (SSLLSKDSSSL).

It belongs to the NASP family. In terms of assembly, interacts with cnp1, hht1, hht2 and hht3; has a preference for CENP-A (cnp1) over histone H3 (hht1/2/3).

Its subcellular location is the nucleus. Functionally, histone H3 and H3-like CENP-A-specific chaperone. Promotes delivery and incorporation of CENP-A in centromeric chromatin, probably by escorting nascent CENP-A to CENP-A chromatin assembly factors. Required for central core silencing and normal chromosome segregation. This Schizosaccharomyces pombe (strain 972 / ATCC 24843) (Fission yeast) protein is NASP-related protein sim3 (sim3).